Consider the following 540-residue polypeptide: GMP synthase [glutamine-hydrolyzing] (540 aa).

The 194-residue stretch at 29 to 222 (KILIVDFGSQ…VRKVAGLTGD (194 aa)) folds into the Glutamine amidotransferase type-1 domain. The active-site Nucleophile is the Cys106. Catalysis depends on residues His196 and Glu198. A GMPS ATP-PPase domain is found at 223–415 (WTMRAFREEA…LGLPEIFVGR (193 aa)). 250–256 (SGGVDSA) provides a ligand contact to ATP.

Homodimer.

The enzyme catalyses XMP + L-glutamine + ATP + H2O = GMP + L-glutamate + AMP + diphosphate + 2 H(+). The protein operates within purine metabolism; GMP biosynthesis; GMP from XMP (L-Gln route): step 1/1. Functionally, catalyzes the synthesis of GMP from XMP. The polypeptide is GMP synthase [glutamine-hydrolyzing] (Rhodopseudomonas palustris (strain HaA2)).